Consider the following 219-residue polypeptide: Large ribosomal subunit protein bL25 (219 aa).

Residues 176-219 (VTVVPPTDEPSEEEVEAMEGESATEEPEVVGEDKEDDEEENKED) are disordered. Acidic residues predominate over residues 184-219 (EPSEEEVEAMEGESATEEPEVVGEDKEDDEEENKED).

It belongs to the bacterial ribosomal protein bL25 family. CTC subfamily. In terms of assembly, part of the 50S ribosomal subunit; part of the 5S rRNA/L5/L18/L25 subcomplex. Contacts the 5S rRNA. Binds to the 5S rRNA independently of L5 and L18.

Its function is as follows. This is one of the proteins that binds to the 5S RNA in the ribosome where it forms part of the central protuberance. The chain is Large ribosomal subunit protein bL25 from Staphylococcus epidermidis (strain ATCC 35984 / DSM 28319 / BCRC 17069 / CCUG 31568 / BM 3577 / RP62A).